The sequence spans 42 residues: Photosystem I reaction center subunit IX (42 aa).

A helical transmembrane segment spans residues Tyr-7 to Ile-27.

Belongs to the PsaJ family.

The protein localises to the plastid. Its subcellular location is the chloroplast thylakoid membrane. Functionally, may help in the organization of the PsaE and PsaF subunits. This is Photosystem I reaction center subunit IX from Anthoceros angustus (Hornwort).